The primary structure comprises 681 residues: Anaphase-promoting complex subunit 2 (681 aa).

This sequence belongs to the cullin family. As to quaternary structure, the APC/C is composed of at least 13 subunits: apc1, apc2, nuc2, apc4, apc5, cut9, apc8, apc10, apc11, hcn1, apc13, apc14 and apc15.

Its function is as follows. Component of the anaphase-promoting complex/cyclosome (APC/C), a cell cycle-regulated E3 ubiquitin-protein ligase complex that controls progression through mitosis and the G1 phase of the cell cycle. The APC/C is thought to confer substrate specificity and, in the presence of ubiquitin-conjugating E2 enzymes, it catalyzes the formation of protein-ubiquitin conjugates that are subsequently degraded by the 26S proteasome. This chain is Anaphase-promoting complex subunit 2 (apc2), found in Schizosaccharomyces pombe (strain 972 / ATCC 24843) (Fission yeast).